Consider the following 436-residue polypeptide: Carboxypeptidase A5 (436 aa).

A signal peptide spans 1–33 (MQGTPGGGTRPGPSPVDRRTLLVFSFILAAALG). Residues 34 to 126 (QMNFTGDQVL…ERQAMAKSRR (93 aa)) constitute a propeptide, activation peptide. The region spanning 138–431 (SYHTLEEIYS…MALRTIMEHT (294 aa)) is the Peptidase M14 domain. Zn(2+) is bound by residues His-196 and Glu-199. Residues 196 to 199 (HSRE), Arg-254, and 271 to 272 (NR) each bind substrate. The cysteines at positions 265 and 288 are disulfide-linked. His-323 contributes to the Zn(2+) binding site. Residues 324-325 (SY) and Tyr-375 contribute to the substrate site. Residue Glu-397 is the Proton donor/acceptor of the active site.

This sequence belongs to the peptidase M14 family. Requires Zn(2+) as cofactor. Expression is very low or not detectable.

The protein localises to the secreted. This is Carboxypeptidase A5 (CPA5) from Homo sapiens (Human).